Consider the following 597-residue polypeptide: Elongation factor 4 (597 aa).

The tr-type G domain occupies 2-184 (QHIRNFSIIA…TIVARVPAPQ (183 aa)). GTP-binding positions include 14–19 (DHGKST) and 131–134 (NKMD).

Belongs to the TRAFAC class translation factor GTPase superfamily. Classic translation factor GTPase family. LepA subfamily.

It is found in the cell inner membrane. It carries out the reaction GTP + H2O = GDP + phosphate + H(+). Its function is as follows. Required for accurate and efficient protein synthesis under certain stress conditions. May act as a fidelity factor of the translation reaction, by catalyzing a one-codon backward translocation of tRNAs on improperly translocated ribosomes. Back-translocation proceeds from a post-translocation (POST) complex to a pre-translocation (PRE) complex, thus giving elongation factor G a second chance to translocate the tRNAs correctly. Binds to ribosomes in a GTP-dependent manner. This Bordetella petrii (strain ATCC BAA-461 / DSM 12804 / CCUG 43448) protein is Elongation factor 4.